The chain runs to 82 residues: Sulfur carrier protein TusA (82 aa).

The active-site Cysteine persulfide intermediate is cysteine 19.

Belongs to the sulfur carrier protein TusA family.

The protein localises to the cytoplasm. Sulfur carrier protein which probably makes part of a sulfur-relay system. The chain is Sulfur carrier protein TusA from Vibrio cholerae serotype O1 (strain ATCC 39541 / Classical Ogawa 395 / O395).